Consider the following 198-residue polypeptide: Recombination protein RecR (198 aa).

A C4-type zinc finger spans residues 57–72 (CEKCNTFTEAQICEVC). In terms of domain architecture, Toprim spans 80-175 (TLLCVVETPA…SVTRLARGVP (96 aa)).

This sequence belongs to the RecR family.

Functionally, may play a role in DNA repair. It seems to be involved in an RecBC-independent recombinational process of DNA repair. It may act with RecF and RecO. The chain is Recombination protein RecR from Paraburkholderia phymatum (strain DSM 17167 / CIP 108236 / LMG 21445 / STM815) (Burkholderia phymatum).